A 330-amino-acid chain; its full sequence is 3'-5' exonuclease (330 aa).

The segment at 1-92 (MDQYLIKMST…DGTPSPEKEI (92 aa)) is disordered. Composition is skewed to basic and acidic residues over residues 27 to 39 (NTTR…KEKI) and 48 to 66 (KDTP…ENPP). Residues Ser-79 and Ser-87 each carry the phosphoserine modification. Residues 117–289 (SADEVMQWVE…IGQVIYRDIE (173 aa)) enclose the 3'-5' exonuclease domain. Positions 139, 141, and 277 each coordinate Mg(2+).

This sequence belongs to the WRNexo family.

Its subcellular location is the nucleus. Its function is as follows. Has exonuclease activity on both single-stranded and duplex templates bearing overhangs, but not blunt ended duplex DNA, and cleaves in a 3'-5' direction. Essential for the formation of DNA replication focal centers. Has an important role in maintaining genome stability. The sequence is that of 3'-5' exonuclease from Drosophila virilis (Fruit fly).